Here is a 355-residue protein sequence, read N- to C-terminus: uncharacterized protein (355 aa).

The interval 1–61 (MNKKIEKNNN…PKRRGRRPKK (61 aa)) is disordered. The span at 18 to 37 (YESNTTDNQLIMKKNANSGS) shows a compositional bias: polar residues.

This is an uncharacterized protein from Acanthamoeba polyphaga mimivirus (APMV).